Reading from the N-terminus, the 41-residue chain is GCKKDRKPCSYHADCCNCCLSGICAPSTNWILPGCSTSTFT.

4 disulfide bridges follow: Cys2–Cys16, Cys9–Cys19, Cys15–Cys24, and Cys18–Cys35. At Pro8 the chain carries 4-hydroxyproline. A 4-hydroxyproline modification is found at Pro26.

In terms of processing, position 41 corresponds to a L-threonine, and not a D-threonine as firstly supposed. In terms of tissue distribution, expressed by the venom duct.

The protein resides in the secreted. Functionally, iota-conotoxins bind to voltage-gated sodium channels (Nav) and act as agonists by shifting the voltage-dependence of activation to more hyperpolarized levels. Both natural (L-Thr form) and synthetic (D-Thr form) peptides cause paralysis and death following intracranial injection and grooming and hypersensitivity upon intraperitoneal injection into mice. The L-Thr form of the peptide is 7-fold more potent than the D-Thr form. Both natural peptide (L-Thr form) and synthetic peptide (D-Thr form) are active on nerve, and on muscle. The protein is Iota-conotoxin-like r11d of Conus radiatus (Rayed cone).